The following is a 290-amino-acid chain: Short-chain dehydrogenase srdE (290 aa).

NADP(+)-binding residues include Ile11, Thr37, Asp58, and Asn86. A helical membrane pass occupies residues Leu125 to Val145. NADP(+) is bound at residue Tyr150. The active-site Proton donor is Tyr150. Asn151 is a glycosylation site (N-linked (GlcNAc...) asparagine). The NADP(+) site is built by Lys154, Val183, and Thr185. The active-site Lowers pKa of active site Tyr is Lys154.

This sequence belongs to the short-chain dehydrogenases/reductases (SDR) family.

The protein localises to the membrane. Its function is as follows. Short-chain dehydrogenase; part of the gene cluster that mediates the biosynthesis of sordarial, a salicylic aldehyde structurally related to the phytotoxin pyriculol. The most interesting aspect of this pathway is formation of an aromatic product from the highly reducing polyketide synthase srdA. SrdA synthesizes a reduced polyketide chain from one molecule of acetyl-CoA and five molecules of malonyl-CoA. The polyketide chain is then reductively released as an aldehyde. The oxidoreductases srdC, srdD and srdE then oxidize one of the hydroxy groups to facilitate the intramolecular aldol condensation, followed by dehydration to yield a salicylic aldehyde. This aldehyde can undergo facile reduction by endogenous reductases to yield the alcohol 1-hydroxy-2-hydroxymethyl-3-pent-1,3-dienylbenzene. The flavin-dependent srdI counteract against the propensity of the aldehydes to be reduced under physiological conditions and is responsible for reoxidizing 1-hydroxy-2-hydroxymethyl-3-pent-1,3-dienylbenzene back to the salicylic aldehyde. This salicylic aldehyde is then selectively epoxidized by the cupin-domain-containing oxidoreductase srdB to yield the epoxide, which can be hydrolyzed stereoselectively by the hydrolase srdG to give the final product sordarial. The chain is Short-chain dehydrogenase srdE from Neurospora crassa (strain ATCC 24698 / 74-OR23-1A / CBS 708.71 / DSM 1257 / FGSC 987).